Consider the following 675-residue polypeptide: DNA ligase (675 aa).

NAD(+) contacts are provided by residues 36 to 40, 85 to 86, and E118; these read DAVYD and SL. K120 serves as the catalytic N6-AMP-lysine intermediate. Positions 141, 178, 298, and 322 each coordinate NAD(+). Residues C416, C419, C434, and C439 each contribute to the Zn(2+) site. Residues 598-675 enclose the BRCT domain; that stretch reads TQPQTLSGKT…SEADLLALLQ (78 aa).

Belongs to the NAD-dependent DNA ligase family. LigA subfamily. Mg(2+) is required as a cofactor. Mn(2+) serves as cofactor.

It catalyses the reaction NAD(+) + (deoxyribonucleotide)n-3'-hydroxyl + 5'-phospho-(deoxyribonucleotide)m = (deoxyribonucleotide)n+m + AMP + beta-nicotinamide D-nucleotide.. DNA ligase that catalyzes the formation of phosphodiester linkages between 5'-phosphoryl and 3'-hydroxyl groups in double-stranded DNA using NAD as a coenzyme and as the energy source for the reaction. It is essential for DNA replication and repair of damaged DNA. This chain is DNA ligase, found in Acaryochloris marina (strain MBIC 11017).